A 484-amino-acid polypeptide reads, in one-letter code: Putative tyramine receptor 2 (484 aa).

The Extracellular portion of the chain corresponds to Met1 to Thr54. A glycan (N-linked (GlcNAc...) asparagine) is linked at Asn13. The chain crosses the membrane as a helical span at residues Ala55 to Phe77. The Cytoplasmic segment spans residues Thr78 to Asn87. The helical transmembrane segment at Phe88 to Val109 threads the bilayer. At Ala110 to Met126 the chain is on the extracellular side. Cys124 and Cys203 are disulfide-bonded. A helical transmembrane segment spans residues Trp127 to Leu147. The Cytoplasmic segment spans residues Asp148–Arg167. The helical transmembrane segment at Val168 to Trp190 threads the bilayer. The Extracellular segment spans residues Asn191–Ser215. N-linked (GlcNAc...) asparagine glycosylation is present at Asn198. The chain crosses the membrane as a helical span at residues Ser216 to Ala237. The Cytoplasmic portion of the chain corresponds to Thr238–Thr411. A compositionally biased stretch (polar residues) spans Ser253–Thr280. Disordered stretches follow at residues Ser253–Val322 and Thr350–Val383. Positions Glu295 to Lys306 are enriched in basic residues. A compositionally biased stretch (low complexity) spans Thr350–Thr360. Residues Ala361 to Ala378 show a composition bias toward polar residues. Residues Leu412–Val433 form a helical membrane-spanning segment. The Extracellular portion of the chain corresponds to Pro434 to Asn448. Residues Phe449–Leu470 traverse the membrane as a helical segment. Topologically, residues Asp471 to Thr484 are cytoplasmic.

The protein belongs to the G-protein coupled receptor 1 family.

The protein resides in the cell membrane. In terms of biological role, G-protein coupled receptor for tyramine, a known neurotransmitter and neuromodulator and direct precursor of octopamine. The sequence is that of Putative tyramine receptor 2 (GCR2) from Locusta migratoria (Migratory locust).